The primary structure comprises 625 residues: Mitochondrial Rho GTPase 1 (625 aa).

Topologically, residues 1–601 (MSDDETLADV…LRRVFYLNDS (601 aa)) are cytoplasmic. The region spanning 3 to 170 (DDETLADVRI…EIFYYAQKAV (168 aa)) is the Miro 1 domain. GTP contacts are provided by residues 16-23 (GDEGCGKT), 62-66 (DLSIK), and 123-126 (NKSD). EF-hand domains lie at 188 to 223 (RARKALIRVFKICDRDNDGYLSDTELNDFQKLCFGI) and 308 to 343 (EGVQFVSALFEKYDEDKDGCLSPSELQNLFSVCPVP). Positions 201, 203, 205, 207, 212, 321, 323, 325, 327, and 332 each coordinate Ca(2+). Positions 420–625 (HGTDRKVFQC…LAGFLVLKNL (206 aa)) constitute a Miro 2 domain. Residues 433–440 (GAKDAGKT), 470–474 (RVKEE), and 537–540 (TKVE) contribute to the GTP site. A helical; Anchor for type IV membrane protein transmembrane segment spans residues 602–622 (NLLSKITFGAAIVALAGFLVL). Over 623–625 (KNL) the chain is Mitochondrial intermembrane.

The protein belongs to the mitochondrial Rho GTPase family.

The protein localises to the mitochondrion outer membrane. In terms of biological role, mitochondrial GTPase involved in mitochondrial trafficking. Probably involved in control of anterograde transport of mitochondria and their subcellular distribution. Plays a role in maintaining mitochondrial morphology. This Caenorhabditis elegans protein is Mitochondrial Rho GTPase 1.